Consider the following 197-residue polypeptide: Guanylate kinase (197 aa).

In terms of domain architecture, Guanylate kinase-like spans 7–185 (GLIIILSSPS…TLKKIHEIIV (179 aa)). 14-21 (SPSGTGKS) is an ATP binding site.

Belongs to the guanylate kinase family.

It is found in the cytoplasm. It catalyses the reaction GMP + ATP = GDP + ADP. Essential for recycling GMP and indirectly, cGMP. This Rickettsia prowazekii (strain Madrid E) protein is Guanylate kinase (gmk).